Here is a 175-residue protein sequence, read N- to C-terminus: uncharacterized protein (175 aa).

The DNL-type zinc-finger motif lies at 71-166; sequence QPKPTYNVSF…KPPQFKIRPA (96 aa). Positions 82, 85, 107, and 110 each coordinate Zn(2+).

This is an uncharacterized protein from Schizosaccharomyces pombe (strain 972 / ATCC 24843) (Fission yeast).